The primary structure comprises 186 residues: MNTMFKSPKLSPQRLVTLAMLIALAFAIGKLSIPIIPQQLIISPTFIVNVMIGMIGGPIWAFISLAILDIVDNLSSGAGNFIIWWTLLEAVQGLFYGLFFYQKSLSWTNKKDWLHVTIATAIIMLIGSFIFTPLLVQIYYGVPFWAQFAAGRWLKIFEIPIRILVTMAIMPQLQRIPELRKLANFK.

Helical transmembrane passes span 16-36 (VTLA…IPII), 47-67 (IVNV…SLAI), 81-101 (FIIW…LFFY), 116-136 (VTIA…PLLV), and 153-173 (WLKI…MPQL).

Forms a stable energy-coupling factor (ECF) transporter complex composed of a membrane-embedded substrate-binding protein (S component), two ATP-binding proteins (A components) and a transmembrane protein (T component).

It localises to the cell membrane. In terms of biological role, folate-binding protein that interacts with the energy-coupling factor (ECF) ABC-transporter complex. Unlike classic ABC transporters this ECF transporter provides the energy necessary to transport a number of different substrates. The substrates themselves are bound by transmembrane, not extracytoplasmic soluble proteins. The protein is Folate transporter FolT (folT) of Streptococcus mutans serotype c (strain ATCC 700610 / UA159).